The following is a 512-amino-acid chain: Cytochrome P450 26B1 (512 aa).

Cysteine 441 lines the heme pocket.

It belongs to the cytochrome P450 family. Heme is required as a cofactor.

It is found in the endoplasmic reticulum membrane. It localises to the microsome membrane. The catalysed reaction is all-trans-retinoate + reduced [NADPH--hemoprotein reductase] + O2 = all-trans-4-hydroxyretinoate + oxidized [NADPH--hemoprotein reductase] + H2O + H(+). It catalyses the reaction all-trans-retinoate + reduced [NADPH--hemoprotein reductase] + O2 = all-trans-18-hydroxyretinoate + oxidized [NADPH--hemoprotein reductase] + H2O + H(+). A cytochrome P450 monooxygenase involved in the metabolism of retinoates (RAs), the active metabolites of vitamin A, and critical signaling molecules in animals. RAs exist as at least four different isomers: all-trans-RA (atRA), 9-cis-RA, 13-cis-RA, and 9,13-dicis-RA, where atRA is considered to be the biologically active isomer, although 9-cis-RA and 13-cis-RA also have activity. Catalyzes the hydroxylation of atRA primarily at C-4 and C-18, thereby contributing to the regulation of atRA homeostasis and signaling. Hydroxylation of atRA limits its biological activity and initiates a degradative process leading to its eventual elimination. Involved in the convertion of atRA to all-trans-4-oxo-RA. Can oxidize all-trans-13,14-dihydroretinoate (DRA) to metabolites which could include all-trans-4-oxo-DRA, all-trans-4-hydroxy-DRA, all-trans-5,8-epoxy-DRA, and all-trans-18-hydroxy-DRA. Shows preference for the following substrates: atRA &gt; 9-cis-RA &gt; 13-cis-RA. Plays a central role in germ cell development: acts by degrading RAs in the developing testis, preventing STRA8 expression, thereby leading to delay of meiosis. Required for the maintenance of the undifferentiated state of male germ cells during embryonic development in Sertoli cells, inducing arrest in G0 phase of the cell cycle and preventing meiotic entry. Plays a role in skeletal development, both at the level of patterning and in the ossification of bone and the establishment of some synovial joints. Essential for postnatal survival. Its function is as follows. Also has a significant activity in oxidation of tazarotenic acid and may therefore metabolize that xenobiotic in vivo. The sequence is that of Cytochrome P450 26B1 (Cyp26b1) from Rattus norvegicus (Rat).